We begin with the raw amino-acid sequence, 726 residues long: Catalase-peroxidase (726 aa).

Residues 1–33 (MSTTDDTHNTLSTGKCPFHQGGHDRSAGAGTAS) form a disordered region. A cross-link (tryptophyl-tyrosyl-methioninium (Trp-Tyr) (with M-252)) is located at residues 105–226 (WHGAGTYRSI…LGATEMGLIY (122 aa)). The active-site Proton acceptor is H106. A cross-link (tryptophyl-tyrosyl-methioninium (Tyr-Met) (with W-105)) is located at residues 226–252 (YVNPEGPDHSGEPLSAAAAIRATFGNM). H267 contacts heme b.

Belongs to the peroxidase family. Peroxidase/catalase subfamily. Homodimer or homotetramer. It depends on heme b as a cofactor. In terms of processing, formation of the three residue Trp-Tyr-Met cross-link is important for the catalase, but not the peroxidase activity of the enzyme.

It carries out the reaction H2O2 + AH2 = A + 2 H2O. It catalyses the reaction 2 H2O2 = O2 + 2 H2O. Functionally, bifunctional enzyme with both catalase and broad-spectrum peroxidase activity. The polypeptide is Catalase-peroxidase (Salmonella typhi).